The primary structure comprises 160 residues: Small ribosomal subunit protein uS17z (160 aa).

It belongs to the universal ribosomal protein uS17 family.

The protein resides in the cytoplasm. The protein is Small ribosomal subunit protein uS17z (RPS11A) of Arabidopsis thaliana (Mouse-ear cress).